We begin with the raw amino-acid sequence, 318 residues long: Acetyl-coenzyme A carboxylase carboxyl transferase subunit beta (318 aa).

Residues 25–294 (LWSKCSECGT…AVKGELPAPA (270 aa)) form the CoA carboxyltransferase N-terminal domain. Residues Cys29, Cys32, Cys48, and Cys51 each coordinate Zn(2+). The C4-type zinc-finger motif lies at 29–51 (CSECGTMLFHRELSDNLNVCTNC). Positions 286–318 (VKGELPAPAPLESDAETALASDTDPNGAPPSKD) are disordered.

It belongs to the AccD/PCCB family. In terms of assembly, acetyl-CoA carboxylase is a heterohexamer composed of biotin carboxyl carrier protein (AccB), biotin carboxylase (AccC) and two subunits each of ACCase subunit alpha (AccA) and ACCase subunit beta (AccD). It depends on Zn(2+) as a cofactor.

The protein localises to the cytoplasm. It carries out the reaction N(6)-carboxybiotinyl-L-lysyl-[protein] + acetyl-CoA = N(6)-biotinyl-L-lysyl-[protein] + malonyl-CoA. Its pathway is lipid metabolism; malonyl-CoA biosynthesis; malonyl-CoA from acetyl-CoA: step 1/1. Component of the acetyl coenzyme A carboxylase (ACC) complex. Biotin carboxylase (BC) catalyzes the carboxylation of biotin on its carrier protein (BCCP) and then the CO(2) group is transferred by the transcarboxylase to acetyl-CoA to form malonyl-CoA. The chain is Acetyl-coenzyme A carboxylase carboxyl transferase subunit beta from Jannaschia sp. (strain CCS1).